Here is a 317-residue protein sequence, read N- to C-terminus: U5 small nuclear ribonucleoprotein TSSC4 (317 aa).

Residues 1–19 (MAETEAGLEVEEPTEDDTL) show a composition bias toward acidic residues. The interval 1–78 (MAETEAGLEV…IPTTAVQPFH (78 aa)) is disordered. The segment covering 20 to 37 (PSDTVSLSDSDSDLSLPS) has biased composition (low complexity). Ser57, Ser64, Ser83, and Ser92 each carry phosphoserine. Positions 74–101 (VQPFHLRGMSSTFSQRSHSIFDCLESAA) are hom2; mediates interaction with the U5 snRNP complexes and required for spliceosomal tri-snRNP complex assembly. The disordered stretch occupies residues 123–151 (VAPPSQTPARSLSRVHGNTDPTRVHPVPD). Residues 146 to 300 (VHPVPDYVSH…SKKRSRDHFR (155 aa)) are interaction with SNRNP200. The tract at residues 147 to 183 (HPVPDYVSHPERWTKYSLEDVSETSEQSNRDAALAFL) is hom3; mediates interaction with the U5 snRNP complexes. The tract at residues 198 to 238 (FNQDPSSCGEGRVVFTKPVRGSEARAERKRVLKKGVVSGAG) is hom4; necessary for interaction with the PRPF19 complex and required for spliceosomal tri-snRNP complex assembly. Lys214 carries the N6-acetyllysine modification. The disordered stretch occupies residues 247 to 317 (HLAGPEAEEW…GPGSERGPSV (71 aa)).

The protein belongs to the TSSC4 family. In terms of assembly, interacts in a RNA-independent manner with distinct U5 snRNP-containing complexes, the mono-U5 snRNP and the post-splicing U5 snRNP-PRPF19 complex. Interacts with SNRNP200; the interaction is direct, excludes recruitment of C9ORF78 and WBP4 to SNRNP200 and negatively regulates its RNA helicase activity. Interacts with PRPF8; the interaction is direct.

It is found in the nucleus. It localises to the cytoplasm. Its function is as follows. Protein associated with the U5 snRNP, during its maturation and its post-splicing recycling and which is required for spliceosomal tri-snRNP complex assembly in the nucleus. Has a molecular sequestering activity and transiently hinders SNRNP200 binding sites for constitutive splicing factors that intervene later during the assembly of the spliceosome and splicing. Together with its molecular sequestering activity, may also function as a molecular adapter and placeholder, coordinating the assembly of the U5 snRNP and its association with the U4/U6 di-snRNP. In Rattus norvegicus (Rat), this protein is U5 small nuclear ribonucleoprotein TSSC4.